A 227-amino-acid polypeptide reads, in one-letter code: Phosphoribosylformylglycinamidine synthase subunit PurQ (227 aa).

The Glutamine amidotransferase type-1 domain maps to 2–227; sequence RWAIVRFPGA…FLGLVREVAR (226 aa). Cys85 (nucleophile) is an active-site residue. Active-site residues include His200 and Glu202.

As to quaternary structure, part of the FGAM synthase complex composed of 1 PurL, 1 PurQ and 2 PurS subunits.

The protein resides in the cytoplasm. The enzyme catalyses N(2)-formyl-N(1)-(5-phospho-beta-D-ribosyl)glycinamide + L-glutamine + ATP + H2O = 2-formamido-N(1)-(5-O-phospho-beta-D-ribosyl)acetamidine + L-glutamate + ADP + phosphate + H(+). It catalyses the reaction L-glutamine + H2O = L-glutamate + NH4(+). The protein operates within purine metabolism; IMP biosynthesis via de novo pathway; 5-amino-1-(5-phospho-D-ribosyl)imidazole from N(2)-formyl-N(1)-(5-phospho-D-ribosyl)glycinamide: step 1/2. In terms of biological role, part of the phosphoribosylformylglycinamidine synthase complex involved in the purines biosynthetic pathway. Catalyzes the ATP-dependent conversion of formylglycinamide ribonucleotide (FGAR) and glutamine to yield formylglycinamidine ribonucleotide (FGAM) and glutamate. The FGAM synthase complex is composed of three subunits. PurQ produces an ammonia molecule by converting glutamine to glutamate. PurL transfers the ammonia molecule to FGAR to form FGAM in an ATP-dependent manner. PurS interacts with PurQ and PurL and is thought to assist in the transfer of the ammonia molecule from PurQ to PurL. The polypeptide is Phosphoribosylformylglycinamidine synthase subunit PurQ (Thermus thermophilus (strain ATCC BAA-163 / DSM 7039 / HB27)).